Here is a 194-residue protein sequence, read N- to C-terminus: Early growth response protein 1 (194 aa).

3 consecutive C2H2-type zinc fingers follow at residues 1–18 (CDRR…IRIH), 24–46 (FQCR…IRTH), and 52–74 (FACD…TKIH).

This sequence belongs to the EGR C2H2-type zinc-finger protein family.

The protein localises to the nucleus. It localises to the cytoplasm. In terms of biological role, transcriptional regulator. Recognizes and binds to the DNA sequence 5'-GCG(T/G)GGGCG-3'(EGR-site) in the promoter region of target genes. Binds double-stranded target DNA, irrespective of the cytosine methylation status. Regulates the transcription of numerous target genes, and thereby plays an important role in regulating the response to growth factors, DNA damage, and ischemia. Plays a role in the regulation of cell survival, proliferation and cell death. Mediates responses to ischemia and hypoxia; regulates the expression of proteins that are involved in inflammatory processes. Plays a role in regulating the expression of circadian clock genes. The protein is Early growth response protein 1 (EGR1) of Gallus gallus (Chicken).